Reading from the N-terminus, the 209-residue chain is uncharacterized protein (209 aa).

A run of 4 helical transmembrane segments spans residues 21-41 (LAYL…VFGL), 81-101 (ILGL…RIAA), 107-127 (VLVN…LYVF), and 159-179 (AAGA…LLFF).

Its subcellular location is the cell membrane. This is an uncharacterized protein from Bacillus subtilis (strain 168).